A 164-amino-acid chain; its full sequence is CDP-archaeol synthase (164 aa).

4 helical membrane-spanning segments follow: residues 3 to 23 (LLYFFLLIWPPYVANGSAVLA), 51 to 71 (YEGFLIGLSTGTFIGYAPNLL), 77 to 97 (LLDAFVLSIAALLGDLFGAFI), and 122 to 142 (LAVYTLYKDISVEYIIAAVII).

It belongs to the CDP-archaeol synthase family. Mg(2+) serves as cofactor.

It is found in the cell membrane. The enzyme catalyses 2,3-bis-O-(geranylgeranyl)-sn-glycerol 1-phosphate + CTP + H(+) = CDP-2,3-bis-O-(geranylgeranyl)-sn-glycerol + diphosphate. The protein operates within membrane lipid metabolism; glycerophospholipid metabolism. Functionally, catalyzes the formation of CDP-2,3-bis-(O-geranylgeranyl)-sn-glycerol (CDP-archaeol) from 2,3-bis-(O-geranylgeranyl)-sn-glycerol 1-phosphate (DGGGP) and CTP. This reaction is the third ether-bond-formation step in the biosynthesis of archaeal membrane lipids. This chain is CDP-archaeol synthase, found in Pyrobaculum islandicum (strain DSM 4184 / JCM 9189 / GEO3).